Here is a 145-residue protein sequence, read N- to C-terminus: Basic phospholipase A2 GL1-1 (145 aa).

The signal sequence occupies residues 1–21 (MYPAHLLVLLAVCVSLLGASA). Residues 22–27 (IPPLPL) constitute a propeptide that is removed on maturation. Intrachain disulfides connect C38–C98, C54–C144, C56–C72, C71–C125, C78–C118, C87–C111, and C105–C116. Positions 55, 57, and 59 each coordinate Ca(2+). H75 is a catalytic residue. D76 serves as a coordination point for Ca(2+). The active site involves D119.

This sequence belongs to the phospholipase A2 family. Group I subfamily. D49 sub-subfamily. Ca(2+) serves as cofactor. As to expression, expressed by the venom gland.

The protein localises to the secreted. It catalyses the reaction a 1,2-diacyl-sn-glycero-3-phosphocholine + H2O = a 1-acyl-sn-glycero-3-phosphocholine + a fatty acid + H(+). PLA2 catalyzes the calcium-dependent hydrolysis of the 2-acyl groups in 3-sn-phosphoglycerides. The sequence is that of Basic phospholipase A2 GL1-1 from Laticauda semifasciata (Black-banded sea krait).